A 595-amino-acid polypeptide reads, in one-letter code: Aspartate--tRNA(Asp/Asn) ligase (595 aa).

Position 175 (Glu-175) interacts with L-aspartate. Positions 199-202 (QQYK) are aspartate. Positions 221 and 454 each coordinate L-aspartate. 221–223 (RDE) serves as a coordination point for ATP. Residue Glu-488 participates in ATP binding. Residue Arg-495 coordinates L-aspartate. 540 to 543 (GIDR) is a binding site for ATP.

This sequence belongs to the class-II aminoacyl-tRNA synthetase family. Type 1 subfamily. In terms of assembly, homodimer.

Its subcellular location is the cytoplasm. It catalyses the reaction tRNA(Asx) + L-aspartate + ATP = L-aspartyl-tRNA(Asx) + AMP + diphosphate. Functionally, aspartyl-tRNA synthetase with relaxed tRNA specificity since it is able to aspartylate not only its cognate tRNA(Asp) but also tRNA(Asn). Reaction proceeds in two steps: L-aspartate is first activated by ATP to form Asp-AMP and then transferred to the acceptor end of tRNA(Asp/Asn). In Brucella abortus (strain S19), this protein is Aspartate--tRNA(Asp/Asn) ligase.